Here is a 542-residue protein sequence, read N- to C-terminus: CTP synthase (542 aa).

The tract at residues 1–265 (MTRFIFITGG…DVQVCRHFHL (265 aa)) is amidoligase domain. CTP is bound at residue Ser-13. Position 13 (Ser-13) interacts with UTP. Residues 14-19 (SLGKGL) and Asp-71 each bind ATP. Positions 71 and 139 each coordinate Mg(2+). Residues 146-148 (DIE), 186-191 (KTKPTQ), and Lys-222 contribute to the CTP site. UTP-binding positions include 186 to 191 (KTKPTQ) and Lys-222. The Glutamine amidotransferase type-1 domain occupies 291 to 541 (TIAVVGKYTS…VQAAITQSRL (251 aa)). Gly-353 is a binding site for L-glutamine. The active-site Nucleophile; for glutamine hydrolysis is Cys-380. L-glutamine-binding positions include 381 to 384 (FGMQ), Glu-404, and Arg-469. Active-site residues include His-514 and Glu-516.

The protein belongs to the CTP synthase family. As to quaternary structure, homotetramer.

The enzyme catalyses UTP + L-glutamine + ATP + H2O = CTP + L-glutamate + ADP + phosphate + 2 H(+). The catalysed reaction is L-glutamine + H2O = L-glutamate + NH4(+). It catalyses the reaction UTP + NH4(+) + ATP = CTP + ADP + phosphate + 2 H(+). The protein operates within pyrimidine metabolism; CTP biosynthesis via de novo pathway; CTP from UDP: step 2/2. With respect to regulation, allosterically activated by GTP, when glutamine is the substrate; GTP has no effect on the reaction when ammonia is the substrate. The allosteric effector GTP functions by stabilizing the protein conformation that binds the tetrahedral intermediate(s) formed during glutamine hydrolysis. Inhibited by the product CTP, via allosteric rather than competitive inhibition. Catalyzes the ATP-dependent amination of UTP to CTP with either L-glutamine or ammonia as the source of nitrogen. Regulates intracellular CTP levels through interactions with the four ribonucleotide triphosphates. This chain is CTP synthase, found in Rhodospirillum rubrum (strain ATCC 11170 / ATH 1.1.1 / DSM 467 / LMG 4362 / NCIMB 8255 / S1).